An 89-amino-acid chain; its full sequence is MAISKEKKNEIIAQYARHEGDTGSVEVQVAVLTWEINHLNSHIKQHKKDHATYRGLMKKIGHRRNLLAYLRRTDVNRYRELIQSLGLRR.

Belongs to the universal ribosomal protein uS15 family. In terms of assembly, part of the 30S ribosomal subunit. Forms a bridge to the 50S subunit in the 70S ribosome, contacting the 23S rRNA.

Its function is as follows. One of the primary rRNA binding proteins, it binds directly to 16S rRNA where it helps nucleate assembly of the platform of the 30S subunit by binding and bridging several RNA helices of the 16S rRNA. Forms an intersubunit bridge (bridge B4) with the 23S rRNA of the 50S subunit in the ribosome. The chain is Small ribosomal subunit protein uS15 from Streptococcus pyogenes serotype M1.